The following is a 331-amino-acid chain: Ketol-acid reductoisomerase (NADP(+)) (331 aa).

The KARI N-terminal Rossmann domain maps to 2–182 (ARMYYDADAQ…GGTRAGILET (181 aa)). NADP(+) is bound by residues 25–28 (YGSQ), Ser-51, Ser-53, and 83–86 (DEVQ). Residue His-108 is part of the active site. Gly-134 contributes to the NADP(+) binding site. Residues 183 to 328 (TFREETETDL…QELRSMFSWL (146 aa)) form the KARI C-terminal knotted domain. Residues Asp-191, Glu-195, Glu-227, and Glu-231 each coordinate Mg(2+). A substrate-binding site is contributed by Ser-252.

This sequence belongs to the ketol-acid reductoisomerase family. The cofactor is Mg(2+).

It carries out the reaction (2R)-2,3-dihydroxy-3-methylbutanoate + NADP(+) = (2S)-2-acetolactate + NADPH + H(+). The enzyme catalyses (2R,3R)-2,3-dihydroxy-3-methylpentanoate + NADP(+) = (S)-2-ethyl-2-hydroxy-3-oxobutanoate + NADPH + H(+). Its pathway is amino-acid biosynthesis; L-isoleucine biosynthesis; L-isoleucine from 2-oxobutanoate: step 2/4. It functions in the pathway amino-acid biosynthesis; L-valine biosynthesis; L-valine from pyruvate: step 2/4. Its function is as follows. Involved in the biosynthesis of branched-chain amino acids (BCAA). Catalyzes an alkyl-migration followed by a ketol-acid reduction of (S)-2-acetolactate (S2AL) to yield (R)-2,3-dihydroxy-isovalerate. In the isomerase reaction, S2AL is rearranged via a Mg-dependent methyl migration to produce 3-hydroxy-3-methyl-2-ketobutyrate (HMKB). In the reductase reaction, this 2-ketoacid undergoes a metal-dependent reduction by NADPH to yield (R)-2,3-dihydroxy-isovalerate. The sequence is that of Ketol-acid reductoisomerase (NADP(+)) from Thermosynechococcus vestitus (strain NIES-2133 / IAM M-273 / BP-1).